A 388-amino-acid chain; its full sequence is Formate-dependent phosphoribosylglycinamide formyltransferase (388 aa).

N(1)-(5-phospho-beta-D-ribosyl)glycinamide-binding positions include 20–21 and Glu-80; that span reads EL. Residues Arg-112, Lys-153, 158-163, 193-196, and Glu-201 contribute to the ATP site; these read SSGKGQ and EEFI. The ATP-grasp domain maps to 117–306; it reads RLAFEKLGLR…EFEIHARAIL (190 aa). The Mg(2+) site is built by Glu-265 and Glu-277. Residues Asp-284, Lys-352, and 359-360 each bind N(1)-(5-phospho-beta-D-ribosyl)glycinamide; that span reads RR.

This sequence belongs to the PurK/PurT family. Homodimer.

The catalysed reaction is N(1)-(5-phospho-beta-D-ribosyl)glycinamide + formate + ATP = N(2)-formyl-N(1)-(5-phospho-beta-D-ribosyl)glycinamide + ADP + phosphate + H(+). It participates in purine metabolism; IMP biosynthesis via de novo pathway; N(2)-formyl-N(1)-(5-phospho-D-ribosyl)glycinamide from N(1)-(5-phospho-D-ribosyl)glycinamide (formate route): step 1/1. Involved in the de novo purine biosynthesis. Catalyzes the transfer of formate to 5-phospho-ribosyl-glycinamide (GAR), producing 5-phospho-ribosyl-N-formylglycinamide (FGAR). Formate is provided by PurU via hydrolysis of 10-formyl-tetrahydrofolate. The polypeptide is Formate-dependent phosphoribosylglycinamide formyltransferase (Methanococcus maripaludis (strain DSM 14266 / JCM 13030 / NBRC 101832 / S2 / LL)).